The following is a 243-amino-acid chain: Small ribosomal subunit protein mS23 (243 aa).

The protein belongs to the mitochondrion-specific ribosomal protein mS23 family. Component of the mitochondrial small ribosomal subunit.

The protein resides in the mitochondrion. This Emericella nidulans (strain FGSC A4 / ATCC 38163 / CBS 112.46 / NRRL 194 / M139) (Aspergillus nidulans) protein is Small ribosomal subunit protein mS23 (rsm25).